A 105-amino-acid chain; its full sequence is SAGA-associated factor 11 (105 aa).

The SGF11-type zinc finger occupies 76-97 (FRCPNCSRDLSANRFAAHLERC).

Belongs to the SGF11 family. In terms of assembly, component of the 1.8 MDa SAGA transcription coactivator-HAT complex. SAGA is built of 5 distinct domains with specialized functions. Within the SAGA complex, SUS1, SGF11, SGF73 and UBP8 form an additional subcomplex of SAGA called the DUB module (deubiquitination module). Interacts directly with SGF73, SUS1 and UBP8.

Its subcellular location is the nucleus. Its function is as follows. Functions as a component of the transcription regulatory histone acetylation (HAT) complex SAGA. At the promoters, SAGA is required for recruitment of the basal transcription machinery. It influences RNA polymerase II transcriptional activity through different activities such as TBP interaction and promoter selectivity, interaction with transcription activators, and chromatin modification through histone acetylation and deubiquitination. SAGA acetylates nucleosomal histone H3 to some extent (to form H3K9ac, H3K14ac, H3K18ac and H3K23ac). SAGA interacts with DNA via upstream activating sequences (UASs). Involved in transcriptional regulation of a subset of SAGA-regulated genes. Within the SAGA complex, participates in a subcomplex, that specifically deubiquitinates histones H2B. In Eremothecium gossypii (strain ATCC 10895 / CBS 109.51 / FGSC 9923 / NRRL Y-1056) (Yeast), this protein is SAGA-associated factor 11.